Here is a 305-residue protein sequence, read N- to C-terminus: Serine/threonine-protein kinase 16 (305 aa).

A lipid anchor (N-myristoyl glycine) is attached at Gly-2. S-palmitoyl cysteine attachment occurs at residues Cys-6 and Cys-8. Residues 20–293 (YLFVQKLGEG…PVLLSQLEAL (274 aa)) form the Protein kinase domain. Residues 26–34 (LGEGGFSYV) and Lys-49 contribute to the ATP site. Asp-148 serves as the catalytic Proton acceptor. Residues 166–202 (DLGSMNQACIQVEGSRQALALQDWAAQRCTISYRAPE) form an activation loop region. Ser-197 carries the post-translational modification Phosphoserine; by autocatalysis. At Tyr-198 the chain carries Phosphotyrosine; by autocatalysis.

It belongs to the protein kinase superfamily. Ser/Thr protein kinase family. In terms of assembly, monomer. Interacts with DRG1 (via its N-terminal); the interaction phosphorylates DRG1. In terms of processing, mainly autophosphorylated on serine/threonine residues. Also autophosphorylated on Tyr-198. As to expression, ubiquitously expressed at low levels. Relatively higher levels in testis, kidney and liver.

It is found in the cytoplasm. It localises to the perinuclear region. Its subcellular location is the membrane. It catalyses the reaction L-seryl-[protein] + ATP = O-phospho-L-seryl-[protein] + ADP + H(+). It carries out the reaction L-threonyl-[protein] + ATP = O-phospho-L-threonyl-[protein] + ADP + H(+). The catalysed reaction is L-tyrosyl-[protein] + ATP = O-phospho-L-tyrosyl-[protein] + ADP + H(+). Functionally, membrane-associated protein kinase that phosphorylates on serine and threonine residues. In vitro substrates include DRG1, ENO1 and EIF4EBP1. Also autophosphorylates. May be involved in secretory vesicle trafficking or intracellular signaling. May have a role in regulating stromal-epithelial interactions that occur during ductal morphogenesis in the mammary gland. May be involved in TGF-beta signaling. Able to autophosphorylate on Tyr residue; it is however unclear whether it has tyrosine-protein kinase toward other proteins. The chain is Serine/threonine-protein kinase 16 (Stk16) from Mus musculus (Mouse).